The primary structure comprises 355 residues: Adenine deaminase (355 aa).

The Zn(2+) site is built by H23, H25, and H211. The active-site Proton donor is the E214. Zn(2+) is bound at residue D292. D293 lines the substrate pocket.

The protein belongs to the metallo-dependent hydrolases superfamily. Adenosine and AMP deaminases family. Adenine deaminase type 2 subfamily. Zn(2+) serves as cofactor.

The protein localises to the cytoplasm. The protein resides in the nucleus. The catalysed reaction is adenine + H2O + H(+) = hypoxanthine + NH4(+). Its function is as follows. Catalyzes the hydrolytic deamination of adenine to hypoxanthine. Plays an important role in the purine salvage pathway and in nitrogen catabolism. The protein is Adenine deaminase of Kluyveromyces lactis (strain ATCC 8585 / CBS 2359 / DSM 70799 / NBRC 1267 / NRRL Y-1140 / WM37) (Yeast).